A 614-amino-acid polypeptide reads, in one-letter code: Serine/threonine-protein kinase-like protein E (614 aa).

Positions 15–404 (YLIQLHLGQN…NPNTNGAPLS (390 aa)) constitute a Protein kinase domain. 21–29 (LGQNSLGQQ) is a binding site for ATP. Positions 256-269 (PEQTDNGVGKSSTG) are enriched in polar residues. A disordered region spans residues 256–284 (PEQTDNGVGKSSTGEPPFPTVHQSPESSS).

The protein belongs to the protein kinase superfamily. Ser/Thr protein kinase family.

Functionally, lacks protein kinase activity. The protein is Serine/threonine-protein kinase-like protein E (spkE) of Synechocystis sp. (strain ATCC 27184 / PCC 6803 / Kazusa).